The primary structure comprises 83 residues: Large ribosomal subunit protein bL31B (83 aa).

This sequence belongs to the bacterial ribosomal protein bL31 family. Type B subfamily. In terms of assembly, part of the 50S ribosomal subunit.

This chain is Large ribosomal subunit protein bL31B, found in Lactobacillus johnsonii (strain CNCM I-12250 / La1 / NCC 533).